A 390-amino-acid polypeptide reads, in one-letter code: Succinate--CoA ligase [ADP-forming] subunit beta (390 aa).

Residues 9-245 (KELLSRYGLP…KSQENEREVK (237 aa)) enclose the ATP-grasp domain. ATP is bound by residues K46, 53 to 55 (GRG), E100, Y103, and E108. Residues N200 and D214 each contribute to the Mg(2+) site. Substrate is bound by residues N265 and 322 to 324 (GIV).

The protein belongs to the succinate/malate CoA ligase beta subunit family. In terms of assembly, heterotetramer of two alpha and two beta subunits. It depends on Mg(2+) as a cofactor.

It carries out the reaction succinate + ATP + CoA = succinyl-CoA + ADP + phosphate. The enzyme catalyses GTP + succinate + CoA = succinyl-CoA + GDP + phosphate. It participates in carbohydrate metabolism; tricarboxylic acid cycle; succinate from succinyl-CoA (ligase route): step 1/1. In terms of biological role, succinyl-CoA synthetase functions in the citric acid cycle (TCA), coupling the hydrolysis of succinyl-CoA to the synthesis of either ATP or GTP and thus represents the only step of substrate-level phosphorylation in the TCA. The beta subunit provides nucleotide specificity of the enzyme and binds the substrate succinate, while the binding sites for coenzyme A and phosphate are found in the alpha subunit. This Chromobacterium violaceum (strain ATCC 12472 / DSM 30191 / JCM 1249 / CCUG 213 / NBRC 12614 / NCIMB 9131 / NCTC 9757 / MK) protein is Succinate--CoA ligase [ADP-forming] subunit beta.